A 375-amino-acid polypeptide reads, in one-letter code: Serpentine receptor class alpha-39 (375 aa).

The next 7 helical transmembrane spans lie at Leu-17 to Ile-37, Leu-51 to Trp-71, Ile-99 to Leu-119, Leu-138 to Leu-158, Val-183 to Val-203, Thr-236 to Phe-256, and Leu-275 to Leu-295.

This sequence belongs to the nematode receptor-like protein sra family.

The protein resides in the membrane. The sequence is that of Serpentine receptor class alpha-39 (sra-39) from Caenorhabditis elegans.